The chain runs to 577 residues: Steryl-sulfatase (577 aa).

A signal peptide spans 1-19 (MLWPCLLALLLSQLNFLCA). The Lumenal segment spans residues 21–183 (RPGPGPNFLL…GTVFGSAQQV (163 aa)). Ca(2+) contacts are provided by Asp34 and Asp35. The N-linked (GlcNAc...) asparagine glycan is linked to Asn46. Cys74 lines the Ca(2+) pocket. Residue Cys74 is the Nucleophile of the active site. At Cys74 the chain carries 3-oxoalanine (Cys). The active site involves His135. 2 disulfides stabilise this stretch: Cys140–Cys147 and Cys169–Cys241. The helical transmembrane segment at 184-207 (FVVLPMNILGAVLLAMALARWAGL) threads the bilayer. The Cytoplasmic portion of the chain corresponds to 208-211 (ARPP). Residues 212 to 233 (GWVFGVTVAAMAAVGGAYVAFL) form a helical membrane-spanning segment. Topologically, residues 234–577 (YHFRPANCFL…PLACRCAGDG (344 aa)) are lumenal. N-linked (GlcNAc...) asparagine glycosylation occurs at Asn332. Asp341 and His342 together coordinate Ca(2+). 3 disulfide bridges follow: Cys445/Cys488, Cys480/Cys486, and Cys561/Cys571. Asn458 is a glycosylation site (N-linked (GlcNAc...) asparagine).

It belongs to the sulfatase family. As to quaternary structure, homodimer. It depends on Ca(2+) as a cofactor. In terms of processing, the conversion to 3-oxoalanine (also known as C-formylglycine, FGly), of a serine or cysteine residue in prokaryotes and of a cysteine residue in eukaryotes, is critical for catalytic activity.

The protein resides in the microsome membrane. It localises to the endoplasmic reticulum membrane. The catalysed reaction is dehydroepiandrosterone 3-sulfate + H2O = 3beta-hydroxyandrost-5-en-17-one + sulfate + H(+). It carries out the reaction estrone 3-sulfate + H2O = estrone + sulfate + H(+). Its function is as follows. Catalyzes the conversion of sulfated steroid precursors, such as dehydroepiandrosterone sulfate (DHEA-S) and estrone sulfate to the free steroid. In Rattus norvegicus (Rat), this protein is Steryl-sulfatase (Sts).